A 91-amino-acid chain; its full sequence is DNA-directed RNA polymerase subunit omega (91 aa).

Belongs to the RNA polymerase subunit omega family. As to quaternary structure, the RNAP catalytic core consists of 2 alpha, 1 beta, 1 beta' and 1 omega subunit. When a sigma factor is associated with the core the holoenzyme is formed, which can initiate transcription.

The enzyme catalyses RNA(n) + a ribonucleoside 5'-triphosphate = RNA(n+1) + diphosphate. In terms of biological role, promotes RNA polymerase assembly. Latches the N- and C-terminal regions of the beta' subunit thereby facilitating its interaction with the beta and alpha subunits. This Syntrophus aciditrophicus (strain SB) protein is DNA-directed RNA polymerase subunit omega.